Reading from the N-terminus, the 293-residue chain is 33 kDa chaperonin (293 aa).

Cystine bridges form between Cys229/Cys231 and Cys262/Cys265.

Belongs to the HSP33 family. Under oxidizing conditions two disulfide bonds are formed involving the reactive cysteines. Under reducing conditions zinc is bound to the reactive cysteines and the protein is inactive.

The protein resides in the cytoplasm. Functionally, redox regulated molecular chaperone. Protects both thermally unfolding and oxidatively damaged proteins from irreversible aggregation. Plays an important role in the bacterial defense system toward oxidative stress. In Methylobacillus flagellatus (strain ATCC 51484 / DSM 6875 / VKM B-1610 / KT), this protein is 33 kDa chaperonin.